A 161-amino-acid chain; its full sequence is Large ribosomal subunit protein uL10 (161 aa).

This sequence belongs to the universal ribosomal protein uL10 family. Part of the ribosomal stalk of the 50S ribosomal subunit. The N-terminus interacts with L11 and the large rRNA to form the base of the stalk. The C-terminus forms an elongated spine to which L12 dimers bind in a sequential fashion forming a multimeric L10(L12)X complex.

Its function is as follows. Forms part of the ribosomal stalk, playing a central role in the interaction of the ribosome with GTP-bound translation factors. The chain is Large ribosomal subunit protein uL10 (rplJ) from Mycoplasma pneumoniae (strain ATCC 29342 / M129 / Subtype 1) (Mycoplasmoides pneumoniae).